A 398-amino-acid polypeptide reads, in one-letter code: Mitochondrial protein import protein mas5 (398 aa).

Positions 7-88 (GYYKVLELSP…KKKKEYDSGM (82 aa)) constitute a J domain. A CR-type zinc finger spans residues 139–219 (GKVSKFNVRT…CNGAEYIQDK (81 aa)). 144 to 146 (FNV) contacts substrate. Cys-152, Cys-155, Cys-166, Cys-169, Cys-192, Cys-195, Cys-207, and Cys-210 together coordinate Zn(2+). 4 CXXCXGXG motif repeats span residues 152-159 (CTTCDGKG), 166-173 (CKKCNGNG), 192-199 (CDGCDGSG), and 207-214 (CSTCNGAE). Residues 221-222 (MF) and 253-255 (VIF) each bind substrate. A disordered region spans residues 367–386 (FGSMPEPERDHEDASEEGAQ).

The protein belongs to the DnaJ family. As to quaternary structure, homodimer. It depends on Zn(2+) as a cofactor.

Its subcellular location is the cytoplasm. Functionally, probably involved in mitosomal protein import. In Encephalitozoon cuniculi (strain GB-M1) (Microsporidian parasite), this protein is Mitochondrial protein import protein mas5 (MAS5).